Here is a 145-residue protein sequence, read N- to C-terminus: 3-dehydroquinate dehydratase (145 aa).

Y23 serves as the catalytic Proton acceptor. Substrate contacts are provided by N74, H80, and D87. H100 serves as the catalytic Proton donor. Residues 101 to 102 (LS) and R111 each bind substrate.

Belongs to the type-II 3-dehydroquinase family. As to quaternary structure, homododecamer.

The catalysed reaction is 3-dehydroquinate = 3-dehydroshikimate + H2O. The protein operates within metabolic intermediate biosynthesis; chorismate biosynthesis; chorismate from D-erythrose 4-phosphate and phosphoenolpyruvate: step 3/7. Catalyzes a trans-dehydration via an enolate intermediate. This Halalkalibacterium halodurans (strain ATCC BAA-125 / DSM 18197 / FERM 7344 / JCM 9153 / C-125) (Bacillus halodurans) protein is 3-dehydroquinate dehydratase.